A 262-amino-acid polypeptide reads, in one-letter code: Acyl-[acyl-carrier-protein]--UDP-N-acetylglucosamine O-acyltransferase (262 aa).

Belongs to the transferase hexapeptide repeat family. LpxA subfamily. As to quaternary structure, homotrimer.

It is found in the cytoplasm. It carries out the reaction a (3R)-hydroxyacyl-[ACP] + UDP-N-acetyl-alpha-D-glucosamine = a UDP-3-O-[(3R)-3-hydroxyacyl]-N-acetyl-alpha-D-glucosamine + holo-[ACP]. It participates in glycolipid biosynthesis; lipid IV(A) biosynthesis; lipid IV(A) from (3R)-3-hydroxytetradecanoyl-[acyl-carrier-protein] and UDP-N-acetyl-alpha-D-glucosamine: step 1/6. Its function is as follows. Involved in the biosynthesis of lipid A, a phosphorylated glycolipid that anchors the lipopolysaccharide to the outer membrane of the cell. The chain is Acyl-[acyl-carrier-protein]--UDP-N-acetylglucosamine O-acyltransferase from Haemophilus influenzae (strain PittEE).